The sequence spans 5087 residues: Nonribosomal peptide synthetase sidC (5087 aa).

Positions 165-563 are adenylation 1; it reads HEMVRHTGNE…NGELQCMGRI (399 aa). The 74-residue stretch at 671-744 folds into the Carrier 1 domain; that stretch reads EPAGDIEQKI…KMAALVLKSQ (74 aa). O-(pantetheine 4'-phosphoryl)serine is present on Ser-705. The condensation 1 stretch occupies residues 782–1112; sequence DIIPCSPIQT…LFDTLFVWQD (331 aa). Residues 1217–1611 form an adenylation 2 region; the sequence is ELAKTDSERI…GRRDDLVKIR (395 aa). A Carrier 2 domain is found at 1740 to 1817; sequence ENLTDNEAKV…RLTRKISQSI (78 aa). Residue Ser-1777 is modified to O-(pantetheine 4'-phosphoryl)serine. The interval 1855 to 2272 is condensation 2; the sequence is KILPCTSLQE…RVMDFSLVES (418 aa). The region spanning 2302 to 2378 is the Carrier 3 domain; sequence EEWSAESLEI…EIASVLQGSK (77 aa). Ser-2339 carries the O-(pantetheine 4'-phosphoryl)serine modification. The segment at 2419–2831 is condensation 3; it reads PCTTPQAGML…STSSSLDTAS (413 aa). Positions 2860-3258 are adenylation 3; sequence ATRHPSRVAL…GRIDDQVKLR (399 aa). A Carrier 4 domain is found at 3387 to 3464; it reads TEDTDTIRKI…LLAKAVESPD (78 aa). Ser-3424 is subject to O-(pantetheine 4'-phosphoryl)serine. The segment at 3506–3910 is condensation 4; sequence ITPCTSLQDG…RSLVEEPFSN (405 aa). The Carrier 5 domain occupies 3943–4019; the sequence is FQWSQAASLL…TMMAEVTVNG (77 aa). The residue at position 3980 (Ser-3980) is an O-(pantetheine 4'-phosphoryl)serine. Residues 4051 to 4416 are condensation 5; it reads EHIYPATPLQ…EYSICVELEA (366 aa). The region spanning 4496–4569 is the Carrier 6 domain; it reads SLLEERIRDT…KMAEIVNSAR (74 aa). The residue at position 4530 (Ser-4530) is an O-(pantetheine 4'-phosphoryl)serine. The tract at residues 4610–4913 is condensation 6; that stretch reads FLPATAGQVY…IQSDLHEIGS (304 aa). Residues 5013–5048 form a disordered region; it reads DVYKVSPPGSQLSQDSPEKQEANNKPSPQPSVDIEA.

The protein belongs to the NRP synthetase family.

It functions in the pathway siderophore biosynthesis. Nonribosomal peptide synthetase; part of the siderophore biosynthetic pathway. Arthroderma benhamiae produces 2 types of extracellular siderophores, ferrichrome C and ferricrocin. The biosynthesis of these siderophores depends on the hydroxylation of ornithine to N(5)-hydroxyornithine, catalyzed by the monooxygenase sidA. The structure of ferricrocin differs from ferrichrome C only by a serine for alanine substitution and the assembly of both siderophores is suggested to be performed by the nonribosomal peptide synthase (NRPS) sidC. The sequence is that of Nonribosomal peptide synthetase sidC from Arthroderma benhamiae (strain ATCC MYA-4681 / CBS 112371) (Trichophyton mentagrophytes).